Here is an 88-residue protein sequence, read N- to C-terminus: MSEELMNRKGRVLTGIVVSDKNDKTIVVRVETLVQHPLLKKYVRRRNKFTAHDPQNECGIGDKVKIIEYRPLSRNKRWHLVSILEKAV.

This sequence belongs to the universal ribosomal protein uS17 family. In terms of assembly, part of the 30S ribosomal subunit.

One of the primary rRNA binding proteins, it binds specifically to the 5'-end of 16S ribosomal RNA. This Nitratidesulfovibrio vulgaris (strain DSM 19637 / Miyazaki F) (Desulfovibrio vulgaris) protein is Small ribosomal subunit protein uS17.